The primary structure comprises 64 residues: Large ribosomal subunit protein bL35 (64 aa).

The tract at residues 1 to 20 is disordered; it reads MKQKTHKGTAKRIKVTGSGK.

Belongs to the bacterial ribosomal protein bL35 family.

This Corynebacterium urealyticum (strain ATCC 43042 / DSM 7109) protein is Large ribosomal subunit protein bL35.